Reading from the N-terminus, the 660-residue chain is ATP-dependent RNA helicase DDX18 (660 aa).

Positions 16 to 153 (RNAKLRQRNL…DVKKADDSEV (138 aa)) are disordered. The span at 25–40 (LKLQETSDTSLSQPQN) shows a compositional bias: polar residues. The segment covering 124-133 (PDTKKAKTEE) has biased composition (basic and acidic residues). Positions 134-143 (SAEACEEPED) are enriched in acidic residues. Residues 169 to 197 (FASLSNLVNENTLKAIEEMGFKRMTEIQH) carry the Q motif motif. A Helicase ATP-binding domain is found at 200-375 (IRPLLEGRDL…RISLKKEPLY (176 aa)). 213–220 (AKTGSGKT) contacts ATP. The DEAD box signature appears at 323–326 (DEAD). One can recognise a Helicase C-terminal domain in the interval 389–559 (GLEQGYVVCP…DIQSQLEKLI (171 aa)).

Belongs to the DEAD box helicase family. DDX18/HAS1 subfamily. Interacts with NOL8; the interaction is RNA-dependent. Interacts with PRC2 complex components EZH2, SUZ2 and JARID2; these interactions prevent deposition of the repressive H3K27me3 mark onto rDNA in pluripotent cells.

It is found in the nucleus. The protein resides in the nucleolus. Its subcellular location is the chromosome. It carries out the reaction ATP + H2O = ADP + phosphate + H(+). In terms of biological role, ATP-dependent RNA helicase that plays a role in the regulation of R-loop homeostasis in both endogenous R-loop-prone regions and at sites of DNA damage. At endogenous loci such as actively transcribed genes, may act as a helicase to resolve the formation of R-loop during transcription and prevent the interference of R-loop with DNA-replication machinery. Also participates in the removal of DNA-lesion-associated R-loop. Plays an essential role for establishing pluripotency during embryogenesis and for pluripotency maintenance in embryonic stem cells. Mechanistically, prevents the polycomb repressive complex 2 (PRC2) from accessing rDNA loci and protects the active chromatin status in nucleolus. In Mus musculus (Mouse), this protein is ATP-dependent RNA helicase DDX18 (Ddx18).